The following is a 265-amino-acid chain: Inositol monophosphatase 2 (265 aa).

The Mg(2+) site is built by E65, D86, L88, and D89. Residue E65 coordinates substrate. Substrate-binding positions include 88–91 (LDGT), 189–191 (GSC), E208, and D216. D216 lines the Mg(2+) pocket.

It belongs to the inositol monophosphatase superfamily. Mg(2+) is required as a cofactor. Low expression in roots, stems, leaves, flowers and young and mature green fruits. Expressed in the stem/leaf junctions, below the shoot apex and on the abaxial side of the petiole of the first expanded leaflets.

It carries out the reaction a myo-inositol phosphate + H2O = myo-inositol + phosphate. It functions in the pathway polyol metabolism; myo-inositol biosynthesis; myo-inositol from D-glucose 6-phosphate: step 2/2. In terms of biological role, responsible for the provision of inositol required for synthesis of phosphatidylinositol and polyphosphoinositides. The chain is Inositol monophosphatase 2 (IMP2) from Solanum lycopersicum (Tomato).